Reading from the N-terminus, the 382-residue chain is 6-oxocyclohex-1-ene-1-carbonyl-CoA hydrolase (382 aa).

It belongs to the enoyl-CoA hydratase/isomerase family. As to quaternary structure, homohexamer.

It catalyses the reaction 6-oxocyclohex-1-ene-1-carbonyl-CoA + 2 H2O = 3-hydroxy-6-carboxyhexanoyl-CoA + H(+). It participates in aromatic compound metabolism; benzoyl-CoA degradation. Its function is as follows. Involved in the central benzoyl-CoA catabolism. Catalyzes the addition of one molecule of water to the double bond and the hydrolytic cleavage of C-C bond in the alicyclic ring, 6-oxocyclohex-1-ene-1-carbonyl-CoA (6-OCH-CoA) to yield 3-hydroxypimelyl-CoA. The polypeptide is 6-oxocyclohex-1-ene-1-carbonyl-CoA hydrolase (Syntrophus aciditrophicus (strain SB)).